We begin with the raw amino-acid sequence, 168 residues long: G/U mismatch-specific DNA glycosylase (168 aa).

The protein belongs to the uracil-DNA glycosylase (UDG) superfamily. TDG/mug family. As to quaternary structure, binds DNA as a monomer.

Its subcellular location is the cytoplasm. It catalyses the reaction Specifically hydrolyzes mismatched double-stranded DNA and polynucleotides, releasing free uracil.. Functionally, excises ethenocytosine and uracil, which can arise by alkylation or deamination of cytosine, respectively, from the corresponding mispairs with guanine in ds-DNA. It is capable of hydrolyzing the carbon-nitrogen bond between the sugar-phosphate backbone of the DNA and the mispaired base. The complementary strand guanine functions in substrate recognition. Required for DNA damage lesion repair in stationary-phase cells. The sequence is that of G/U mismatch-specific DNA glycosylase from Escherichia fergusonii (strain ATCC 35469 / DSM 13698 / CCUG 18766 / IAM 14443 / JCM 21226 / LMG 7866 / NBRC 102419 / NCTC 12128 / CDC 0568-73).